Reading from the N-terminus, the 99-residue chain is Large ribosomal subunit protein uL23 (99 aa).

This sequence belongs to the universal ribosomal protein uL23 family. In terms of assembly, part of the 50S ribosomal subunit. Contacts protein L29, and trigger factor when it is bound to the ribosome.

Functionally, one of the early assembly proteins it binds 23S rRNA. One of the proteins that surrounds the polypeptide exit tunnel on the outside of the ribosome. Forms the main docking site for trigger factor binding to the ribosome. This is Large ribosomal subunit protein uL23 from Pseudomonas savastanoi pv. phaseolicola (strain 1448A / Race 6) (Pseudomonas syringae pv. phaseolicola (strain 1448A / Race 6)).